A 221-amino-acid chain; its full sequence is Oxaloacetate tautomerase FAHD1, mitochondrial (221 aa).

A mitochondrion-targeting transit peptide spans 1–24 (MASTKPLSRFWEWGKNIVCVGRNY). Residue Ser-37 is modified to Phosphoserine. Mg(2+) is bound by residues Glu-68, Glu-70, and Asp-99. Lys-110 carries the N6-acetyllysine modification. The residue at position 112 (Lys-112) is an N6-succinyllysine.

Belongs to the FAH family. As to quaternary structure, homodimer. It depends on Mg(2+) as a cofactor. Mn(2+) serves as cofactor.

Its subcellular location is the mitochondrion. It is found in the cytoplasm. The protein localises to the cytosol. It catalyses the reaction oxaloacetate = enol-oxaloacetate. It carries out the reaction oxaloacetate + H(+) = pyruvate + CO2. The catalysed reaction is a 3-acylpyruvate + H2O = a carboxylate + pyruvate + H(+). The enzyme catalyses acetylpyruvate + H2O = acetate + pyruvate + H(+). It catalyses the reaction 3-fumarylpyruvate + H2O = fumarate + pyruvate + H(+). Oxaloacetate decarboxylation is competitively inhibited by oxalate. Functionally, tautomerase that converts enol-oxaloacetate, a strong inhibitor of succinate dehydrogenase, to the physiological keto form of oxaloacetate. It is thereby required to maximize aerobic respiration efficiency by preventing succinate dehydrogenase inhibition. Also acts as a weak oxaloacetate decarboxylase (ODx), catalyzing the decarboxylation of oxaloacetate (OAA) to pyruvate and CO(2), and as such is likely a regulatory enzyme in the TCA cycle. Also displays acylpyruvase activity, being able to hydrolyze acetylpyruvate and fumarylpyruvate in vitro. This Rattus norvegicus (Rat) protein is Oxaloacetate tautomerase FAHD1, mitochondrial.